Consider the following 54-residue polypeptide: UPF0391 membrane protein Daro_2080 (54 aa).

Helical transmembrane passes span 5–25 (AIVF…GIAA) and 30–50 (IAKI…VMGF).

The protein belongs to the UPF0391 family.

The protein resides in the cell membrane. This is UPF0391 membrane protein Daro_2080 from Dechloromonas aromatica (strain RCB).